The following is a 171-amino-acid chain: UPF0098 protein aq_1250 (171 aa).

Belongs to the UPF0098 family.

The protein is UPF0098 protein aq_1250 of Aquifex aeolicus (strain VF5).